Consider the following 235-residue polypeptide: Orotidine 5'-phosphate decarboxylase (235 aa).

Residues aspartate 10, lysine 32, 59 to 68 (DLKLHDIPNT), threonine 123, arginine 184, glutamine 193, glycine 213, and arginine 214 contribute to the substrate site. The active-site Proton donor is lysine 61.

The protein belongs to the OMP decarboxylase family. Type 1 subfamily. In terms of assembly, homodimer.

It catalyses the reaction orotidine 5'-phosphate + H(+) = UMP + CO2. It functions in the pathway pyrimidine metabolism; UMP biosynthesis via de novo pathway; UMP from orotate: step 2/2. Catalyzes the decarboxylation of orotidine 5'-monophosphate (OMP) to uridine 5'-monophosphate (UMP). This chain is Orotidine 5'-phosphate decarboxylase, found in Paramagnetospirillum magneticum (strain ATCC 700264 / AMB-1) (Magnetospirillum magneticum).